The chain runs to 1308 residues: Receptor tyrosine-protein kinase erbB-4 (1308 aa).

Positions 1–25 (MKLATGLWVWGSLLMAAGTVQPSAS) are cleaved as a signal peptide. At 26-652 (QSVCAGTENK…TLPQHARTPL (627 aa)) the chain is on the extracellular side. Residues cysteine 29 and cysteine 56 are joined by a disulfide bond. N-linked (GlcNAc...) asparagine glycans are attached at residues asparagine 138, asparagine 174, and asparagine 181. 12 cysteine pairs are disulfide-bonded: cysteine 156-cysteine 186, cysteine 189-cysteine 197, cysteine 193-cysteine 205, cysteine 213-cysteine 221, cysteine 217-cysteine 229, cysteine 230-cysteine 238, cysteine 234-cysteine 246, cysteine 249-cysteine 258, cysteine 262-cysteine 289, cysteine 293-cysteine 304, cysteine 308-cysteine 323, and cysteine 326-cysteine 330. Asparagine 253 carries N-linked (GlcNAc...) asparagine glycosylation. N-linked (GlcNAc...) asparagine glycosylation is found at asparagine 410, asparagine 473, and asparagine 495. Disulfide bonds link cysteine 503/cysteine 512, cysteine 507/cysteine 520, cysteine 523/cysteine 532, cysteine 536/cysteine 552, cysteine 555/cysteine 569, cysteine 559/cysteine 577, cysteine 580/cysteine 589, cysteine 593/cysteine 614, cysteine 617/cysteine 625, and cysteine 621/cysteine 633. Asparagine 548 carries N-linked (GlcNAc...) asparagine glycosylation. A glycan (N-linked (GlcNAc...) asparagine) is linked at asparagine 576. The N-linked (GlcNAc...) asparagine glycan is linked to asparagine 620. The hydrophobic stretch at 653 to 673 (IAAGVIGGLFILVIMALTFAV) threads the membrane. At 674-1308 (YVRRKSIKKK…PPYRHRNTVV (635 aa)) the chain is on the cytoplasmic side. Positions 676-684 (RRKSIKKKR) match the Nuclear localization signal motif. Positions 718–985 (LKRVKVLGSG…RMARDPQRYL (268 aa)) constitute a Protein kinase domain. Residues 724–732 (LGSGAFGTV), lysine 751, 797–799 (QLM), and 843–848 (DLAARN) contribute to the ATP site. Aspartate 843 functions as the Proton acceptor in the catalytic mechanism. A phosphotyrosine; by autocatalysis mark is found at tyrosine 875, tyrosine 1035, and tyrosine 1056. Residues 1032 to 1035 (PPIY) carry the PPxy motif 1 motif. Residues 1117-1149 (PHVQEDSSTQRYSADPTVFAPERNPRGELDEEG) form a disordered region. Phosphotyrosine; by autocatalysis is present on residues tyrosine 1150, tyrosine 1162, tyrosine 1188, tyrosine 1202, tyrosine 1242, tyrosine 1258, and tyrosine 1284. The short motif at 1282 to 1285 (PEYL) is the PPxY motif 2 element. The PDZ-binding signature appears at 1290–1292 (LKP).

It belongs to the protein kinase superfamily. Tyr protein kinase family. EGF receptor subfamily. As to quaternary structure, monomer in the absence of bound ligand. Homodimer or heterodimer with another ERBB family member upon ligand binding, thus forming heterotetramers. Interacts with EGFR and ERBB2. Interacts with DLG2 (via its PDZ domain), DLG3 (via its PDZ domain), DLG4 (via its PDZ domain) and SNTB2 (via its PDZ domain). Interacts with MUC1. Interacts (via its PPxy motifs) with WWOX. Interacts (via the PPxY motif 3 of isoform JM-A CYT-2) with YAP1 (via the WW domain 1 of isoform 1). Interacts (isoform JM-A CYT-1 and isoform JM-B CYT-1) with WWP1. Interacts (via its intracellular domain) with TRIM28. Interacts (via the intracellular domains of both CYT-1 and CYT-2 isoforms) with KAP1; the interaction does not phosphorylate KAP1 but represses ERBB4-mediated transcriptional activity. Interacts with PRPU, DDX23, MATR3, RBM15, ILF3, KAP1, U5S1, U2SURP, ITCH, HNRNPU, AP2A1, NULC, LEO1, WWP2, IGHG1, HXK1, GRB7 and SRRT. Interacts (phosphorylated isoform JM-A CYT-1 and isoform JM-B CYT-1) with PIK3R1. Interacts with SHC1. Interacts with GRB2. Interacts (soluble intracellular domain) with BCL2. Interacts (phosphorylated) with STAT1. Interacts with CBFA2T3. Interacts (soluble intracellular domain) with STAT5A. In terms of processing, isoform JM-A CYT-1 and isoform JM-A CYT-2 are processed by ADAM17. Proteolytic processing in response to ligand or 12-O-tetradecanoylphorbol-13-acetate stimulation results in the production of 120 kDa soluble receptor forms and intermediate membrane-anchored 80 kDa fragments (m80HER4), which are further processed by a presenilin-dependent gamma-secretase to release a cytoplasmic intracellular domain (E4ICD; E4ICD1/s80Cyt1 or E4ICD2/s80Cyt2, depending on the isoform). Membrane-anchored 80 kDa fragments of the processed isoform JM-A CYT-1 are more readily degraded by the proteasome than fragments of isoform JM-A CYT-2, suggesting a prevalence of E4ICD2 over E4ICD1. Isoform JM-B CYT-1 and isoform JM-B CYT-2 lack the ADAM17 cleavage site and are not processed by ADAM17, precluding further processing by gamma-secretase. Autophosphorylated on tyrosine residues in response to ligand binding. Autophosphorylation occurs in trans, i.e. one subunit of the dimeric receptor phosphorylates tyrosine residues on the other subunit. Ligands trigger phosphorylation at specific tyrosine residues, thereby creating binding sites for scaffold proteins and effectors. Constitutively phosphorylated at a basal level when overexpressed in heterologous systems; ligand binding leads to increased phosphorylation. Phosphorylation at Tyr-1035 is important for interaction with STAT1. Phosphorylation at Tyr-1056 is important for interaction with PIK3R1. Phosphorylation at Tyr-1242 is important for interaction with SHC1. Phosphorylation at Tyr-1188 may also contribute to the interaction with SHC1. Isoform JM-A CYT-2 is constitutively phosphorylated on tyrosine residues in a ligand-independent manner. E4ICD2 but not E4ICD1 is phosphorylated on tyrosine residues. Post-translationally, ubiquitinated. During mitosis, the ERBB4 intracellular domain is ubiquitinated by the APC/C complex and targeted to proteasomal degradation. Isoform JM-A CYT-1 and isoform JM-B CYT-1 are ubiquitinated by WWP1. The ERBB4 intracellular domain (E4ICD1) is ubiquitinated, and this involves NEDD4. As to expression, isoform JM-A CYT-2 and isoform JM-B CYT-2 are expressed in cerebellum, cerebral cortex, spinal cord, medulla oblongata and eye, but the kidney expresses solely isoform JM-A CYT-2 and the heart solely isoform JM-B CYT-2.

Its subcellular location is the cell membrane. It is found in the nucleus. The protein localises to the mitochondrion. It catalyses the reaction L-tyrosyl-[protein] + ATP = O-phospho-L-tyrosyl-[protein] + ADP + H(+). With respect to regulation, binding of a cognate ligand leads to dimerization and activation by autophosphorylation on tyrosine residues. In vitro kinase activity is increased by Mg(2+). In terms of biological role, tyrosine-protein kinase that plays an essential role as cell surface receptor for neuregulins and EGF family members and regulates development of the heart, the central nervous system and the mammary gland, gene transcription, cell proliferation, differentiation, migration and apoptosis. Required for normal cardiac muscle differentiation during embryonic development, and for postnatal cardiomyocyte proliferation. Required for normal development of the embryonic central nervous system, especially for normal neural crest cell migration and normal axon guidance. Required for mammary gland differentiation, induction of milk proteins and lactation. Acts as cell-surface receptor for the neuregulins NRG1, NRG2, NRG3 and NRG4 and the EGF family members BTC, EREG and HBEGF. Ligand binding triggers receptor dimerization and autophosphorylation at specific tyrosine residues that then serve as binding sites for scaffold proteins and effectors. Ligand specificity and signaling is modulated by alternative splicing, proteolytic processing, and by the formation of heterodimers with other ERBB family members, thereby creating multiple combinations of intracellular phosphotyrosines that trigger ligand- and context-specific cellular responses. Mediates phosphorylation of SHC1 and activation of the MAP kinases MAPK1/ERK2 and MAPK3/ERK1. Isoform JM-A CYT-1 and isoform JM-B CYT-1 phosphorylate PIK3R1, leading to the activation of phosphatidylinositol 3-kinase and AKT1 and protect cells against apoptosis. Isoform JM-A CYT-1 and isoform JM-B CYT-1 mediate reorganization of the actin cytoskeleton and promote cell migration in response to NRG1. Isoform JM-A CYT-2 and isoform JM-B CYT-2 lack the phosphotyrosine that mediates interaction with PIK3R1, and hence do not phosphorylate PIK3R1, do not protect cells against apoptosis, and do not promote reorganization of the actin cytoskeleton and cell migration. Proteolytic processing of isoform JM-A CYT-1 and isoform JM-A CYT-2 gives rise to the corresponding soluble intracellular domains (4ICD) that translocate to the nucleus, promote nuclear import of STAT5A, activation of STAT5A, mammary epithelium differentiation, cell proliferation and activation of gene expression. The ERBB4 soluble intracellular domains (4ICD) colocalize with STAT5A at the CSN2 promoter to regulate transcription of milk proteins during lactation. The ERBB4 soluble intracellular domains can also translocate to mitochondria and promote apoptosis. The protein is Receptor tyrosine-protein kinase erbB-4 (Erbb4) of Mus musculus (Mouse).